We begin with the raw amino-acid sequence, 765 residues long: 5-methyltetrahydropteroyltriglutamate--homocysteine methyltransferase (765 aa).

5-methyltetrahydropteroyltri-L-glutamate is bound by residues 18-21 (REWK) and lysine 114. L-homocysteine is bound by residues 437 to 439 (IGS) and glutamate 490. L-methionine is bound by residues 437–439 (IGS) and glutamate 490. Position 567 (tryptophan 567) interacts with 5-methyltetrahydropteroyltri-L-glutamate. Aspartate 605 is an L-homocysteine binding site. Residue aspartate 605 participates in L-methionine binding. Glutamate 611 is a 5-methyltetrahydropteroyltri-L-glutamate binding site. Residues histidine 647, cysteine 649, and glutamate 671 each contribute to the Zn(2+) site. Histidine 700 functions as the Proton donor in the catalytic mechanism. Cysteine 732 serves as a coordination point for Zn(2+).

It belongs to the vitamin-B12 independent methionine synthase family. Zn(2+) serves as cofactor.

It carries out the reaction 5-methyltetrahydropteroyltri-L-glutamate + L-homocysteine = tetrahydropteroyltri-L-glutamate + L-methionine. It participates in amino-acid biosynthesis; L-methionine biosynthesis via de novo pathway; L-methionine from L-homocysteine (MetE route): step 1/1. Catalyzes the transfer of a methyl group from 5-methyltetrahydrofolate to homocysteine resulting in methionine formation. The protein is 5-methyltetrahydropteroyltriglutamate--homocysteine methyltransferase of Listeria monocytogenes serotype 4b (strain F2365).